The following is a 1659-amino-acid chain: eIF-2-alpha kinase GCN2 (1659 aa).

Positions 17 to 128 (NELEAIRSIY…SFTQEKLDEF (112 aa)) constitute an RWD domain. The tract at residues 149-170 (KEQLEKEEREKQQETIKKRSDE) is disordered. 2 Protein kinase domains span residues 256-527 (LVKP…MKFL) and 599-981 (FEEI…SGWL). Residues 605–613 (LGQGAFGQV) and lysine 628 contribute to the ATP site. Disordered stretches follow at residues 671–691 (NVFESTDEESDLSESSSDFEE) and 727–768 (FENS…VPRR). The residue at position 761 (serine 761) is a Phosphoserine. Aspartate 835 acts as the Proton acceptor in catalysis. 2 positions are modified to phosphothreonine; by autocatalysis: threonine 882 and threonine 887. A histidyl-tRNA synthetase-like region spans residues 999–1519 (NPSSPWQQQV…EFKRWDENSS (521 aa)).

This sequence belongs to the protein kinase superfamily. Ser/Thr protein kinase family. GCN2 subfamily. In terms of assembly, homodimer; homodimerization is important for kinase activation by uncharged tRNAs. Interacts (via N-terminal RWD domain) with GCN1 (via N- and C-terminus); this interaction stimulates GCN2 kinase activity in a GCN20-dependent manner in response to amino acid starvation. Interacts (via N-terminus) with the GCN1-GCN20 complex on translating ribosomes in amino acid-starved cells; GCN1 may bind near the ribosomal A-site and promotes the transfer of uncharged tRNAs from the A-site to the tRNA-binding domain in GCN2 for its subsequent kinase activation, and hence allowing GCN4 translational activation and derepression of amino acid biosynthetic genes. Interacts (via C-terminus) with TIF11; this interaction is direct, occurs in amino acid-repleted cells, may be stabilized in a ribosome-dependent manner, reduces GCN2-mediated eIF-2-alpha phosphorylation but not GCN2 autophosphorylation and is lost in amino acid-starved cells and by uncharged tRNAs. Associates (via C-terminus) with ribosomes. Requires Mg(2+) as cofactor. Autophosphorylated, autophosphorylation on Thr-882 and Thr-887 increases kinase activity.

It is found in the cytoplasm. The enzyme catalyses L-seryl-[protein] + ATP = O-phospho-L-seryl-[protein] + ADP + H(+). It carries out the reaction L-threonyl-[protein] + ATP = O-phospho-L-threonyl-[protein] + ADP + H(+). The integrated stress response (ISR) is activated in response to conditions that promote ribosome collisions: GCN1, which acts as a ribosome collision sensor, activates GCN2. The RQC pathway and the integrated stress response (ISR) antagonize each other: HEL2 prevents the activation of GCN2, while GCN2 suppresses RQC activation. Ribosome stalling-induced integrated stress response prefers ribosomes with empty A sites. The kinase activity is stimulated upon binding to uncharged tRNAs. In terms of biological role, metabolic-stress sensing protein kinase that phosphorylates the alpha subunit of eukaryotic translation initiation factor 2 (eIF-2-alpha/SUI2) on 'Ser-52' in response to low amino acid, carbon, or purine availability. Required for adapatation to nutrient starvation by acting as a key component of the integrated stress response (ISR), by which cells alter their translational and transcriptional output in response to starvation. Converts phosphorylated eIF-2-alpha/SUI2 either to a competitive inhibitor of translation initiation factor eIF-2B, leading to a global protein synthesis repression, and thus to a reduced overall utilization of amino acids, or to a translational initiation activation of specific mRNAs, such as the transcriptional activator GCN4, and hence allowing GCN4-mediated reprogramming of transcription to alleviate nutrient depletion. Binds uncharged tRNAs. Binds to aminoacylated tRNA(Phe) less tightly than to deacylated tRNA(Phe). Binds to double-stranded RNA. In Saccharomyces cerevisiae (strain ATCC 204508 / S288c) (Baker's yeast), this protein is eIF-2-alpha kinase GCN2.